Here is a 291-residue protein sequence, read N- to C-terminus: Undecaprenyl-diphosphatase 2 (291 aa).

6 consecutive transmembrane segments (helical) span residues proline 39–phenylalanine 59, alanine 85–leucine 105, isoleucine 118–alanine 138, phenylalanine 203–alanine 223, proline 231–methionine 251, and phenylalanine 262–leucine 282.

The protein belongs to the UppP family.

The protein localises to the cell membrane. The enzyme catalyses di-trans,octa-cis-undecaprenyl diphosphate + H2O = di-trans,octa-cis-undecaprenyl phosphate + phosphate + H(+). In terms of biological role, catalyzes the dephosphorylation of undecaprenyl diphosphate (UPP). Confers resistance to bacitracin. The chain is Undecaprenyl-diphosphatase 2 from Streptomyces avermitilis (strain ATCC 31267 / DSM 46492 / JCM 5070 / NBRC 14893 / NCIMB 12804 / NRRL 8165 / MA-4680).